Here is a 503-residue protein sequence, read N- to C-terminus: Glycerol kinase (503 aa).

T14 contacts ADP. Residues T14, T15, and S16 each coordinate ATP. T14 provides a ligand contact to sn-glycerol 3-phosphate. An ADP-binding site is contributed by R18. Sn-glycerol 3-phosphate-binding residues include R84, E85, Y136, and D246. Residues R84, E85, Y136, D246, and Q247 each coordinate glycerol. 2 residues coordinate ADP: T268 and G311. The ATP site is built by T268, G311, Q315, and G412. Residues G412 and N416 each coordinate ADP.

This sequence belongs to the FGGY kinase family.

It catalyses the reaction glycerol + ATP = sn-glycerol 3-phosphate + ADP + H(+). It functions in the pathway polyol metabolism; glycerol degradation via glycerol kinase pathway; sn-glycerol 3-phosphate from glycerol: step 1/1. With respect to regulation, inhibited by fructose 1,6-bisphosphate (FBP). In terms of biological role, key enzyme in the regulation of glycerol uptake and metabolism. Catalyzes the phosphorylation of glycerol to yield sn-glycerol 3-phosphate. The sequence is that of Glycerol kinase from Haemophilus influenzae (strain PittGG).